The primary structure comprises 351 residues: uncharacterized protein (351 aa).

6 residues coordinate Zn(2+): histidine 23, histidine 25, lysine 151, histidine 184, histidine 212, and aspartate 270. Lysine 151 carries the N6-carboxylysine modification.

The protein belongs to the metallo-dependent hydrolases superfamily. Phosphotriesterase family. Zn(2+) serves as cofactor.

This is an uncharacterized protein from Mycoplasma pneumoniae (strain ATCC 29342 / M129 / Subtype 1) (Mycoplasmoides pneumoniae).